A 100-amino-acid polypeptide reads, in one-letter code: UPF0235 protein Cvib_0403 (100 aa).

This sequence belongs to the UPF0235 family.

This chain is UPF0235 protein Cvib_0403, found in Chlorobium phaeovibrioides (strain DSM 265 / 1930) (Prosthecochloris vibrioformis (strain DSM 265)).